The primary structure comprises 347 residues: Holliday junction branch migration complex subunit RuvB (347 aa).

Positions 1–10 are enriched in polar residues; that stretch reads MAIVSSSSGR. A disordered region spans residues 1-29; it reads MAIVSSSSGRKSPCRETALVDPQPAPEEQ. A large ATPase domain (RuvB-L) region spans residues 13-198; it reads PCRETALVDP…FGLIQRLEFY (186 aa). Residues L37, R38, G79, K82, T83, T84, R188, Y198, and R235 each coordinate ATP. Position 83 (T83) interacts with Mg(2+). Residues 199–270 form a small ATPAse domain (RuvB-S) region; that stretch reads GQTDLEAIVA…MVAEALSLHR (72 aa). The tract at residues 273 to 347 is head domain (RuvB-H); the sequence is HRGLDASDRR…AARSHIAEAA (75 aa). DNA-binding residues include R328 and R333.

Belongs to the RuvB family. As to quaternary structure, homohexamer. Forms an RuvA(8)-RuvB(12)-Holliday junction (HJ) complex. HJ DNA is sandwiched between 2 RuvA tetramers; dsDNA enters through RuvA and exits via RuvB. An RuvB hexamer assembles on each DNA strand where it exits the tetramer. Each RuvB hexamer is contacted by two RuvA subunits (via domain III) on 2 adjacent RuvB subunits; this complex drives branch migration. In the full resolvosome a probable DNA-RuvA(4)-RuvB(12)-RuvC(2) complex forms which resolves the HJ.

Its subcellular location is the cytoplasm. The enzyme catalyses ATP + H2O = ADP + phosphate + H(+). The RuvA-RuvB-RuvC complex processes Holliday junction (HJ) DNA during genetic recombination and DNA repair, while the RuvA-RuvB complex plays an important role in the rescue of blocked DNA replication forks via replication fork reversal (RFR). RuvA specifically binds to HJ cruciform DNA, conferring on it an open structure. The RuvB hexamer acts as an ATP-dependent pump, pulling dsDNA into and through the RuvAB complex. RuvB forms 2 homohexamers on either side of HJ DNA bound by 1 or 2 RuvA tetramers; 4 subunits per hexamer contact DNA at a time. Coordinated motions by a converter formed by DNA-disengaged RuvB subunits stimulates ATP hydrolysis and nucleotide exchange. Immobilization of the converter enables RuvB to convert the ATP-contained energy into a lever motion, pulling 2 nucleotides of DNA out of the RuvA tetramer per ATP hydrolyzed, thus driving DNA branch migration. The RuvB motors rotate together with the DNA substrate, which together with the progressing nucleotide cycle form the mechanistic basis for DNA recombination by continuous HJ branch migration. Branch migration allows RuvC to scan DNA until it finds its consensus sequence, where it cleaves and resolves cruciform DNA. This is Holliday junction branch migration complex subunit RuvB from Synechococcus sp. (strain CC9902).